The sequence spans 522 residues: E3 ubiquitin-protein ligase DMA2 (522 aa).

2 disordered regions span residues 1-56 (MYTP…RPAS) and 69-92 (QNSQ…PSNS). Low complexity predominate over residues 14–35 (APTSSMTSNSSSASNANTTSSS). Polar residues predominate over residues 36-49 (GINPRNRASGTPSN). Phosphoserine is present on Ser-206. Residues Lys-211, Lys-256, Lys-258, Lys-288, Lys-310, Lys-333, Lys-343, Lys-346, Lys-366, Lys-406, Lys-412, and Lys-423 each participate in a glycyl lysine isopeptide (Lys-Gly) (interchain with G-Cter in ubiquitin) cross-link. One can recognise an FHA domain in the interval 295–358 (LVIGRYTERV…SGTFLNHQRL (64 aa)). Residues 433–477 (CSICLCKIKPCQAIFISPCAHSWHFRCVRRLVMLSYPQFVCPNCR) form an RING-type; atypical zinc finger.

The protein belongs to the DMA1 family. UBC4-dependent autoubiquitination occurs at Lys-211, Lys-258, Lys-288, Lys-310, Lys-333, Lys-343, Lys-346, Lys-366, Lys-406, Lys-412 and Lys-423. UBC13/MMS2-dependent autoubiquitination occurs at Lys-258, Lys-310, Lys-346 and Lys-366. Lys-211, Lys-256, Lys-288, Lys-310, Lys-343, Lys-258, Lys-366 and Lys-412 are also ubiquitinated in trans by DMA1 E3 ligase in association with UBC4.

It is found in the cytoplasm. The catalysed reaction is S-ubiquitinyl-[E2 ubiquitin-conjugating enzyme]-L-cysteine + [acceptor protein]-L-lysine = [E2 ubiquitin-conjugating enzyme]-L-cysteine + N(6)-ubiquitinyl-[acceptor protein]-L-lysine.. E3 ubiquitin-protein ligase which functions in cell cycle retarding in conjunction with the UBC4 and UBC13/MMS2 complex, 2 E2 ubiquitin conjugating enzymes. Involved in nutritional control of the cell cycle. Required for proper spindle positioning, likely regulating septin ring deposition at the bud neck. In Saccharomyces cerevisiae (strain YJM789) (Baker's yeast), this protein is E3 ubiquitin-protein ligase DMA2 (DMA2).